The primary structure comprises 425 residues: MLDQRLLRDNPELISRELGRRGMDVDLTGLQLIAKLQRDLEERRSGLQAEGNRIGKEVGQRIQAGADPKGAEVAELRLQGNQIKQKVAILEDEEKQLTAQLREELLSYPNLPSEACPDGRSEDDNKEVRRWGDPRVEDGLKEHWQIAEQLSLLDTERSVRIAQSRFVTLFGQGARLERALINFMLDLHTGKGYREVLPPVLVNSASLTGSGQLPKFAEESFRCADDDLWLTPTAEVPLTSLHRDEIIPSDQLPLRYVAYSPCFRREAGSYGRDTRGLIRLHQFNKVELYWFVHPEHSEEAHELITADAEAVLQALELPYRVLELCTGDLGFSAARTYDLEVWLAGAGAYREISSCSVCSDFQARRSSIRTKDGKTTRLVHTLNGSGLAIGRTMAALLENGQQPDGSVKLPQALVPYFGCDRLQPE.

The segment at 108 to 134 (YPNLPSEACPDGRSEDDNKEVRRWGDP) is disordered. The segment covering 117 to 134 (PDGRSEDDNKEVRRWGDP) has biased composition (basic and acidic residues). An L-serine-binding site is contributed by 233 to 235 (TAE). 264 to 266 (RRE) contributes to the ATP binding site. L-serine is bound at residue Glu-287. Residue 351-354 (EISS) coordinates ATP. Ser-385 is a binding site for L-serine.

It belongs to the class-II aminoacyl-tRNA synthetase family. Type-1 seryl-tRNA synthetase subfamily. Homodimer. The tRNA molecule binds across the dimer.

It is found in the cytoplasm. It carries out the reaction tRNA(Ser) + L-serine + ATP = L-seryl-tRNA(Ser) + AMP + diphosphate + H(+). The catalysed reaction is tRNA(Sec) + L-serine + ATP = L-seryl-tRNA(Sec) + AMP + diphosphate + H(+). Its pathway is aminoacyl-tRNA biosynthesis; selenocysteinyl-tRNA(Sec) biosynthesis; L-seryl-tRNA(Sec) from L-serine and tRNA(Sec): step 1/1. In terms of biological role, catalyzes the attachment of serine to tRNA(Ser). Is also able to aminoacylate tRNA(Sec) with serine, to form the misacylated tRNA L-seryl-tRNA(Sec), which will be further converted into selenocysteinyl-tRNA(Sec). This chain is Serine--tRNA ligase, found in Synechococcus sp. (strain CC9311).